A 572-amino-acid chain; its full sequence is Urease subunit alpha (572 aa).

One can recognise a Urease domain in the interval 136–572; it reads GGIDTHIHFI…VPLGQRYFLF (437 aa). Residues H141, H143, and K224 each contribute to the Ni(2+) site. K224 carries the N6-carboxylysine modification. H226 provides a ligand contact to substrate. Ni(2+)-binding residues include H253 and H279. H327 functions as the Proton donor in the catalytic mechanism. D367 contributes to the Ni(2+) binding site.

The protein belongs to the metallo-dependent hydrolases superfamily. Urease alpha subunit family. Heterotrimer of UreA (gamma), UreB (beta) and UreC (alpha) subunits. Three heterotrimers associate to form the active enzyme. Ni cation serves as cofactor. In terms of processing, carboxylation allows a single lysine to coordinate two nickel ions.

It is found in the cytoplasm. The enzyme catalyses urea + 2 H2O + H(+) = hydrogencarbonate + 2 NH4(+). It participates in nitrogen metabolism; urea degradation; CO(2) and NH(3) from urea (urease route): step 1/1. This is Urease subunit alpha from Haemophilus influenzae (strain 86-028NP).